Consider the following 179-residue polypeptide: UPF0227 protein VIBHAR_01524 (179 aa).

It belongs to the UPF0227 family.

The sequence is that of UPF0227 protein VIBHAR_01524 from Vibrio campbellii (strain ATCC BAA-1116).